The following is a 466-amino-acid chain: Phage-like element PBSX protein XkdK (466 aa).

Belongs to the myoviridae tail sheath protein family.

In Bacillus subtilis (strain 168), this protein is Phage-like element PBSX protein XkdK (xkdK).